The sequence spans 305 residues: MVATNNVTEIIFVGFSQNWSEQRVISVMFLLMYTAVVLGNGLIVVTILASKVLTSPMYFFLSYLSFVEICYCSVMAPKLIFDSFIKRKVISLKGCLTQMFSLHFFGGTEAFLLMVMAYDRYVAICKPLHYMAIMNQRMCGLLVRIAWGGGLLHSVGQTFLIFQLPFCGPNIMDHYFCDVHPVLELACADTFFISLLIITNGGSISVVSFFVLMASYLIILHFLRSHNLEGQHKALSTCASHVTVVDLFFIPCSLVYIRPCVTLPADKIVAVFYTVVTPLLNPVIYSFRNAEVKNAMRRFIGGKVI.

The Extracellular segment spans residues 1–23 (MVATNNVTEIIFVGFSQNWSEQR). N-linked (GlcNAc...) asparagine glycans are attached at residues Asn6 and Asn18. Residues 24-47 (VISVMFLLMYTAVVLGNGLIVVTI) form a helical membrane-spanning segment. At 48-55 (LASKVLTS) the chain is on the cytoplasmic side. A helical transmembrane segment spans residues 56–77 (PMYFFLSYLSFVEICYCSVMAP). Topologically, residues 78 to 98 (KLIFDSFIKRKVISLKGCLTQ) are extracellular. Cys95 and Cys187 are oxidised to a cystine. Residues 99 to 118 (MFSLHFFGGTEAFLLMVMAY) traverse the membrane as a helical segment. Over 119-137 (DRYVAICKPLHYMAIMNQR) the chain is Cytoplasmic. A helical membrane pass occupies residues 138–156 (MCGLLVRIAWGGGLLHSVG). Residues 157–193 (QTFLIFQLPFCGPNIMDHYFCDVHPVLELACADTFFI) are Extracellular-facing. A helical transmembrane segment spans residues 194 to 217 (SLLIITNGGSISVVSFFVLMASYL). Over 218-233 (IILHFLRSHNLEGQHK) the chain is Cytoplasmic. A helical transmembrane segment spans residues 234–256 (ALSTCASHVTVVDLFFIPCSLVY). At 257–267 (IRPCVTLPADK) the chain is on the extracellular side. The chain crosses the membrane as a helical span at residues 268-287 (IVAVFYTVVTPLLNPVIYSF). The Cytoplasmic segment spans residues 288–305 (RNAEVKNAMRRFIGGKVI).

Belongs to the G-protein coupled receptor 1 family.

Its subcellular location is the cell membrane. Functionally, odorant receptor. The chain is Olfactory receptor 4X1 (OR4X1) from Homo sapiens (Human).